The primary structure comprises 352 residues: Quinolinate synthase (352 aa).

Iminosuccinate-binding residues include H48 and S69. Residue C114 participates in [4Fe-4S] cluster binding. Iminosuccinate contacts are provided by residues 140 to 142 (YAN) and S157. C201 lines the [4Fe-4S] cluster pocket. Residues 227–229 (HPE) and T244 each bind iminosuccinate. Position 298 (C298) interacts with [4Fe-4S] cluster.

This sequence belongs to the quinolinate synthase family. Type 1 subfamily. [4Fe-4S] cluster is required as a cofactor.

The protein resides in the cytoplasm. The catalysed reaction is iminosuccinate + dihydroxyacetone phosphate = quinolinate + phosphate + 2 H2O + H(+). It participates in cofactor biosynthesis; NAD(+) biosynthesis; quinolinate from iminoaspartate: step 1/1. Its function is as follows. Catalyzes the condensation of iminoaspartate with dihydroxyacetone phosphate to form quinolinate. The protein is Quinolinate synthase of Pseudomonas syringae pv. tomato (strain ATCC BAA-871 / DC3000).